Consider the following 609-residue polypeptide: Pentatricopeptide repeat-containing protein At5g13770, chloroplastic (609 aa).

The N-terminal 44 residues, 1–44 (MAIASGSWVATVNHHANPHSFTSPTKPIFFLSQKPHNFHVCSSR), are a transit peptide targeting the chloroplast. 13 PPR repeats span residues 103–137 (ELRT…KALP), 138–168 (DGQT…FRSD), 172–207 (AVSA…GVEP), 208–242 (SPGC…RLSF), 247–281 (SGSI…GIPE), 282–316 (SSEL…KLLK), 317–351 (DPEM…ELKV), 352–386 (TDCI…ECEA), 387–421 (GQVT…GFDK), 422–456 (CVVA…GCKP), 457–491 (NIWI…KVLP), 492–526 (DKVS…RGKI), and 527–561 (DRAM…GTRL).

It belongs to the PPR family. P subfamily.

Its subcellular location is the plastid. The protein resides in the chloroplast. The protein is Pentatricopeptide repeat-containing protein At5g13770, chloroplastic of Arabidopsis thaliana (Mouse-ear cress).